Consider the following 194-residue polypeptide: MYLINQNGWIEVICGSMFSGKSEELIRRVRRTQFAKQHAIVFKPCIDNRYSEEDVVSHNGLKVKAVPVSASKDIFEHITEEMDVIAIDEVQFFDGDIVEVVQVLANRGYRVIVAGLDQDFRGLPFGQVPQLMAIAEHVTKLQAVCSACGSPASRTQRLIDGEPAAFDDPIILVGASESYEPRCRHCHAVPTKQR.

Residues 15–22 and 88–91 contribute to the ATP site; these read GSMFSGKS and DEVQ. Catalysis depends on Glu89, which acts as the Proton acceptor. Zn(2+) is bound by residues Cys145, Cys148, Cys183, and Cys186.

It belongs to the thymidine kinase family. As to quaternary structure, homotetramer.

The protein resides in the cytoplasm. It carries out the reaction thymidine + ATP = dTMP + ADP + H(+). The chain is Thymidine kinase from Bacillus cereus (strain AH820).